Reading from the N-terminus, the 192-residue chain is Peptidyl-tRNA hydrolase (192 aa).

A tRNA-binding site is contributed by Tyr-17. Residue His-22 is the Proton acceptor of the active site. TRNA-binding residues include Tyr-68, Asn-70, and Asn-116.

The protein belongs to the PTH family. Monomer.

It localises to the cytoplasm. The catalysed reaction is an N-acyl-L-alpha-aminoacyl-tRNA + H2O = an N-acyl-L-amino acid + a tRNA + H(+). In terms of biological role, hydrolyzes ribosome-free peptidyl-tRNAs (with 1 or more amino acids incorporated), which drop off the ribosome during protein synthesis, or as a result of ribosome stalling. Its function is as follows. Catalyzes the release of premature peptidyl moieties from peptidyl-tRNA molecules trapped in stalled 50S ribosomal subunits, and thus maintains levels of free tRNAs and 50S ribosomes. This chain is Peptidyl-tRNA hydrolase, found in Mycobacterium sp. (strain JLS).